We begin with the raw amino-acid sequence, 158 residues long: Transcription elongation factor GreA (158 aa).

Positions 47–68 form a coiled coil; it reads AEYDAAKEAQGLLEMRIAKLEE.

This sequence belongs to the GreA/GreB family.

Functionally, necessary for efficient RNA polymerase transcription elongation past template-encoded arresting sites. The arresting sites in DNA have the property of trapping a certain fraction of elongating RNA polymerases that pass through, resulting in locked ternary complexes. Cleavage of the nascent transcript by cleavage factors such as GreA or GreB allows the resumption of elongation from the new 3'terminus. GreA releases sequences of 2 to 3 nucleotides. This is Transcription elongation factor GreA from Flavobacterium johnsoniae (strain ATCC 17061 / DSM 2064 / JCM 8514 / BCRC 14874 / CCUG 350202 / NBRC 14942 / NCIMB 11054 / UW101) (Cytophaga johnsonae).